Here is a 459-residue protein sequence, read N- to C-terminus: tRNA(Ile2) 2-agmatinylcytidine synthetase TiaS (459 aa).

The OB DNA-binding region spans 282–360; that stretch reads VRVRVWVASI…TINLEKLHII (79 aa).

The protein belongs to the TiaS family.

The protein resides in the cytoplasm. The enzyme catalyses cytidine(34) in tRNA(Ile2) + agmatine + ATP + H2O = 2-agmatinylcytidine(34) in tRNA(Ile2) + AMP + 2 phosphate + 2 H(+). In terms of biological role, ATP-dependent agmatine transferase that catalyzes the formation of 2-agmatinylcytidine (agm2C) at the wobble position (C34) of tRNA(Ile2), converting the codon specificity from AUG to AUA. The protein is tRNA(Ile2) 2-agmatinylcytidine synthetase TiaS of Staphylothermus marinus (strain ATCC 43588 / DSM 3639 / JCM 9404 / F1).